Reading from the N-terminus, the 130-residue chain is Small ribosomal subunit protein uS11c (130 aa).

This sequence belongs to the universal ribosomal protein uS11 family. In terms of assembly, part of the 30S ribosomal subunit.

It localises to the plastid. It is found in the chloroplast. The protein is Small ribosomal subunit protein uS11c of Tetradesmus obliquus (Green alga).